Consider the following 876-residue polypeptide: Exosome complex component 10 homolog (876 aa).

The segment at 1–22 is disordered; the sequence is MSGEESMPDEEQKQSEEEEEMI. The region spanning 279–445 is the 3'-5' exonuclease domain; it reads TMIDTKEKLE…YSYDMLREQL (167 aa). 4 residues coordinate Mg(2+): Asp-303, Glu-305, Asp-361, and Asp-430. One can recognise an HRDC domain in the interval 489–569; the sequence is NTRQDYALTH…VEARDVKLEK (81 aa). Composition is skewed to basic and acidic residues over residues 690-730, 741-752, and 834-847; these read EKQE…EFDA, VPDDPNKPKDPE, and KPVRDNNADFDPFH. Positions 690-876 are disordered; it reads EKQEEEERKE…NRQGTINYKK (187 aa). The span at 848 to 861 shows a compositional bias: basic residues; the sequence is QKYRLKNKTKKNMA.

The protein belongs to the exosome component 10/RRP6 family. As to quaternary structure, component of the RNA exosome complex. Interacts with crn-5. Mg(2+) serves as cofactor. As to expression, ubiquitously expressed.

It is found in the nucleus. It localises to the nucleolus. The protein resides in the nucleoplasm. Catalytic component of the RNA exosome complex which has 3'-&gt;5' exoribonuclease activity and participates in a multitude of cellular RNA processing and degradation events. Involved in apoptotic DNA degradation. Involved in regulation of antisense ribosomal siRNA production. Involved in response to cold-warm shock. The protein is Exosome complex component 10 homolog of Caenorhabditis elegans.